A 602-amino-acid polypeptide reads, in one-letter code: Elongation factor 4 (602 aa).

Residues 2 to 184 enclose the tr-type G domain; sequence NHIRNFSIIA…QIVAKVPAPR (183 aa). GTP-binding positions include 14–19 and 131–134; these read DHGKST and NKMD.

Belongs to the TRAFAC class translation factor GTPase superfamily. Classic translation factor GTPase family. LepA subfamily.

It localises to the cell inner membrane. It catalyses the reaction GTP + H2O = GDP + phosphate + H(+). Functionally, required for accurate and efficient protein synthesis under certain stress conditions. May act as a fidelity factor of the translation reaction, by catalyzing a one-codon backward translocation of tRNAs on improperly translocated ribosomes. Back-translocation proceeds from a post-translocation (POST) complex to a pre-translocation (PRE) complex, thus giving elongation factor G a second chance to translocate the tRNAs correctly. Binds to ribosomes in a GTP-dependent manner. In Acidovorax ebreus (strain TPSY) (Diaphorobacter sp. (strain TPSY)), this protein is Elongation factor 4.